Here is a 261-residue protein sequence, read N- to C-terminus: tRNA pseudouridine synthase A (261 aa).

Asp-51 (nucleophile) is an active-site residue. Tyr-109 is a binding site for substrate.

It belongs to the tRNA pseudouridine synthase TruA family. Homodimer.

It carries out the reaction uridine(38/39/40) in tRNA = pseudouridine(38/39/40) in tRNA. In terms of biological role, formation of pseudouridine at positions 38, 39 and 40 in the anticodon stem and loop of transfer RNAs. The polypeptide is tRNA pseudouridine synthase A (Idiomarina loihiensis (strain ATCC BAA-735 / DSM 15497 / L2-TR)).